A 748-amino-acid chain; its full sequence is SNF-related serine/threonine-protein kinase (748 aa).

Residues 16 to 269 form the Protein kinase domain; sequence YDLDKTLGRG…LEEIESHPWL (254 aa). Residues 22 to 30 and lysine 45 contribute to the ATP site; that span reads LGRGHFAVV. The active-site Proton acceptor is the aspartate 139. The residue at position 162 (serine 162) is a Phosphoserine. Threonine 173 carries the phosphothreonine; by LKB1 modification. The UBA domain maps to 291 to 334; it reads SEEEHNSIIQRMVLGDIADRDAIVEALETNRYNHITATYFLLAE. A phosphoserine mark is found at serine 362, serine 390, serine 482, serine 495, and serine 518. A disordered region spans residues 383 to 415; the sequence is SHATVPQSPARAGDNVLNGHRSKGLCDPAKKDE. Acidic residues predominate over residues 491–503; that stretch reads EEGESDDEFDMDE. The tract at residues 491-640 is disordered; it reads EEGESDDEFD…SPSPASASAA (150 aa). Residues 522-532 are compositionally biased toward basic residues; the sequence is VHKRYHRRKSQ. The segment covering 533–542 has biased composition (low complexity); the sequence is GRGSSCSSSE. Arginine 534 is subject to Omega-N-methylarginine. Over residues 549-558 the composition is skewed to basic and acidic residues; the sequence is ESRRRLDKDS. Composition is skewed to gly residues over residues 575-592 and 600-614; these read GSEG…GGGV and QGTG…GGTP. Residue serine 606 is modified to Phosphoserine. The segment covering 629 to 640 has biased composition (low complexity); sequence SSSPSPASASAA.

It belongs to the protein kinase superfamily. CAMK Ser/Thr protein kinase family. It depends on Mg(2+) as a cofactor. Autophosphorylated. Phosphorylation on Thr-173 by STK11/LKB1 in complex with STE20-related adapter-alpha (STRADA) pseudo kinase and CAB39. As to expression, ubiquitously expressed in all tissues examined.

Its subcellular location is the nucleus. It carries out the reaction L-seryl-[protein] + ATP = O-phospho-L-seryl-[protein] + ADP + H(+). It catalyses the reaction L-threonyl-[protein] + ATP = O-phospho-L-threonyl-[protein] + ADP + H(+). Its activity is regulated as follows. Activated by phosphorylation on Thr-173. In terms of biological role, may play a role in hematopoietic cell proliferation or differentiation. Potential mediator of neuronal apoptosis. The sequence is that of SNF-related serine/threonine-protein kinase from Mus musculus (Mouse).